The sequence spans 517 residues: UDP-N-acetylmuramyl-tripeptide synthetase (517 aa).

A UDP-N-acetyl-alpha-D-muramoyl-L-alanyl-D-glutamate-binding site is contributed by Ser-38. Residue 116-122 (GTKGKTT) coordinates ATP. UDP-N-acetyl-alpha-D-muramoyl-L-alanyl-D-glutamate contacts are provided by residues Asn-160, 162–163 (TT), Ser-189, and Arg-197. Position 231 is an N6-carboxylysine (Lys-231).

The protein belongs to the MurCDEF family. MurE subfamily. Post-translationally, carboxylation is probably crucial for Mg(2+) binding and, consequently, for the gamma-phosphate positioning of ATP.

It is found in the cytoplasm. It participates in cell wall biogenesis; peptidoglycan biosynthesis. In terms of biological role, catalyzes the addition of an amino acid to the nucleotide precursor UDP-N-acetylmuramoyl-L-alanyl-D-glutamate (UMAG) in the biosynthesis of bacterial cell-wall peptidoglycan. The chain is UDP-N-acetylmuramyl-tripeptide synthetase from Lacticaseibacillus paracasei (strain ATCC 334 / BCRC 17002 / CCUG 31169 / CIP 107868 / KCTC 3260 / NRRL B-441) (Lactobacillus paracasei).